A 420-amino-acid chain; its full sequence is GDP-mannose transporter 2 (420 aa).

Residues 1-11 (MASYTPSSSRP) are compositionally biased toward polar residues. The interval 1-21 (MASYTPSSSRPHTPLGLSPRG) is disordered. The Cytoplasmic segment spans residues 1 to 76 (MASYTPSSSR…KAKKEEVCMP (76 aa)). The helical transmembrane segment at 77–97 (ASTTVLPILSYCVASIMMTVV) threads the bilayer. Residues 98-106 (NKFVVSGRQ) are Lumenal-facing. The helical transmembrane segment at 107–127 (FTMTFLLLAIQSFVCVACVWL) threads the bilayer. Over 128-145 (AKRIGVINFRDWDMNDAK) the chain is Cytoplasmic. Residues 146-168 (AWFPVSSLLVAVIYTGSKSLQFL) form a helical membrane-spanning segment. Over 169–171 (SIP) the chain is Lumenal. Residues 172–194 (VYTIFKNLTIILIAYGEVIWFGG) traverse the membrane as a helical segment. Topologically, residues 195–200 (HVTPLT) are cytoplasmic. Residues 201 to 223 (LCSFFLMVGSSVIAAWADISTTL) traverse the membrane as a helical segment. The Lumenal portion of the chain corresponds to 224-251 (SKLSAGVAVVDPISGADVPLSSISVMDT). The helical transmembrane segment at 252-272 (MNVGYLWMFINCLASAGYVLF) threads the bilayer. The Cytoplasmic segment spans residues 273–293 (MRKRIKVTGFKDWDSMFYNNL). The chain crosses the membrane as a helical span at residues 294–314 (LSIPVLFVFSLIIEDWGAASF). The Lumenal segment spans residues 315-323 (SRNFPEEGR). Residues 324–344 (AFLLSAIAFSGAAAVFISYST) traverse the membrane as a helical segment. The Cytoplasmic portion of the chain corresponds to 345-355 (AWCVRICGATT). A helical transmembrane segment spans residues 356–376 (YSLVGALNKLPVAASGILFFG). Topologically, residues 377–378 (DP) are lumenal. The helical transmembrane segment at 379-399 (VNFGNVSAILVGGVSGIVYAV) threads the bilayer. Residues 400–420 (AKTNQAKVEKSKQARGGESKA) are Cytoplasmic-facing.

This sequence belongs to the TPT transporter family. SLC35D subfamily. Homooligomer.

It is found in the golgi apparatus membrane. The protein resides in the cytoplasmic vesicle membrane. Its subcellular location is the endoplasmic reticulum membrane. Involved in the import of GDP-mannose from the cytoplasm into the Golgi lumen. In Cryptococcus neoformans var. neoformans serotype D (strain B-3501A) (Filobasidiella neoformans), this protein is GDP-mannose transporter 2 (GMT2).